We begin with the raw amino-acid sequence, 1685 residues long: MSLPFYQRCHQHYDLSYRNKDVRSTVSHYQREKKRSAVYTQGSTAYSSRSSAAHRRESEAFRRASASSSQQQASQHALSSEVSRKAASAYDYGSSHGLTDSSLLLDDYSSKLSPKPKRAKHSLLSGEEKENLPSDYMVPIFSGRQKHVSGITDTEEERIKEAAAYIAQRNLLASEEGITTSKQSTASKQTTASKQSTASKQSTASKQSTASRQSTASRQSVVSKQATSALQQEETSEKKSRKVVIREKAERLSLRKTLEETETYHAKLNEDHLLHAPEFIIKPRSHTVWEKENVKLHCSIAGWPEPRVTWYKNQVPINVHANPGKYIIESRYGMHTLEINGCDFEDTAQYRASAMNVKGELSAYASVVVKRYKGEFDETRFHAGASTMPLSFGVTPYGYASRFEIHFDDKFDVSFGREGETMSLGCRVVITPEIKHFQPEIQWYRNGVPLSPSKWVQTLWSGERATLTFSHLNKEDEGLYTIRVRMGEYYEQYSAYVFVRDADAEIEGAPAAPLDVKCLEANKDYIIISWKQPAVDGGSPILGYFIDKCEVGTDSWSQCNDTPVKFARFPVTGLIEGRSYIFRVRAVNKMGIGFPSRVSEPVAALDPAEKARLKSRPSAPWTGQIIVTEEEPSEGIVPGPPTDLSVTEATRSYVVLSWKPPGQRGHEGIMYFVEKCEAGTENWQRVNTELPVKSPRFALFDLAEGKSYCFRVRCSNSAGVGEPSEATEVTVVGDKLDIPKAPGKIIPSRNTDTSVVVSWEESKDAKELVGYYIEASVAGSGKWEPCNNNPVKGSRFTCHGLVTGQSYIFRVRAVNAAGLSEYSQDSEAIEVKAAIGGGVSPDVCPALSDEPGGLTASRGRVHEASPPTFQKDALLGSKPNKPSLPSSSQNLGQTEVSKVSETVQEELTPPPQKAAPQGKSKSDPLKKKTDRAPPSPPCDITCLESFRDSMVLGWKQPDKIGGAEITGYYVNYREVIDGVPGKWREANVKAVSEEAYKISNLKENMVYQFQVAAMNMAGLGAPSAVSECFKCEEWTIAVPGPPHSLKCSEVRKDSLVLQWKPPVHSGRTPVTGYFVDLKEAKAKEDQWRGLNEAAIKNVYLKVRGLKEGVSYVFRVRAINQAGVGKPSDLAGPVVAETRPGTKEVVVNVDDDGVISLNFECDKMTPKSEFSWSKDYVSTEDSPRLEVESKGNKTKMTFKDLGMDDLGIYSCDVTDTDGIASSYLIDEEELKRLLALSHEHKFPTVPVKSELAVEILEKGQVRFWMQAEKLSGNAKVNYIFNEKEIFEGPKYKMHIDRNTGIIEMFMEKLQDEDEGTYTFQLQDGKATNHSTVVLVGDVFKKLQKEAEFQRQEWIRKQGPHFVEYLSWEVTGECNVLLKCKVANIKKETHIVWYKDEREISVDEKHDFKDGICTLLITEFSKKDAGIYEVILKDDRGKDKSRLKLVDEAFKELMMEVCKKIALSATDLKIQSTAEGIQLYSFVTYYVEDLKVNWSHNGSAIRYSDRVKTGVTGEQIWLQINEPTPNDKGKYVMELFDGKTGHQKTVDLSGQAYDEAYAEFQRLKQAAIAEKNRARVLGGLPDVVTIQEGKALNLTCNVWGDPPPEVSWLKNEKALASDDHCNLKFEAGRTAYFTINGVSTADSGKYGLVVKNKYGSETSDFTVSVFIPEEEARMAALESLKGGKKAK.

Residues 33-80 form a disordered region; that stretch reads KKRSAVYTQGSTAYSSRSSAAHRRESEAFRRASASSSQQQASQHALSS. Low complexity-rich tracts occupy residues 41-51 and 63-80; these read QGSTAYSSRSS and RASA…ALSS. Serine 113 carries the phosphoserine modification. The interval 177-244 is disordered; that stretch reads GITTSKQSTA…TSEKKSRKVV (68 aa). The segment covering 179–220 has biased composition (low complexity); sequence TTSKQSTASKQTTASKQSTASKQSTASKQSTASRQSTASRQS. 6 repeat units span residues 182–187, 188–193, 194–199, 200–205, 206–211, and 212–217. A 6 X 6 AA tandem repeats region spans residues 182-217; that stretch reads KQSTASKQTTASKQSTASKQSTASKQSTASRQSTAS. Polar residues predominate over residues 221 to 233; the sequence is VVSKQATSALQQE. Ig-like C2-type domains lie at 277-368 and 396-498; these read PEFI…ASVV and PYGY…AYVF. Fibronectin type-III domains are found at residues 512–607, 640–734, and 741–834; these read APLD…ALDP, PPTD…VVGD, and APGK…VKAA. The interval 840 to 938 is disordered; that stretch reads SPDVCPALSD…TDRAPPSPPC (99 aa). A compositionally biased stretch (low complexity) spans 874–888; that stretch reads LLGSKPNKPSLPSSS. Residues serine 883 and serine 887 each carry the phosphoserine modification. The span at 889–902 shows a compositional bias: polar residues; sequence QNLGQTEVSKVSET. Residues 920 to 931 are compositionally biased toward basic and acidic residues; sequence SKSDPLKKKTDR. 2 Fibronectin type-III domains span residues 933–1034 and 1041–1140; these read PPSP…CEEW and PPHS…TRPG. Serine 1054 is subject to Phosphoserine. Ig-like C2-type domains are found at residues 1132–1230, 1358–1444, and 1573–1662; these read PVVA…EELK, PHFV…LKLV, and RVLG…FTVS. Cysteine 1160 and cysteine 1210 are joined by a disulfide.

Homodimer. Interacts with TTN/titin. Interacts with PNKD.

The protein resides in the cytoplasm. It localises to the myofibril. It is found in the sarcomere. Its subcellular location is the m line. Functionally, major component of the vertebrate myofibrillar M band. Binds myosin, titin, and light meromyosin. This binding is dose dependent. In Homo sapiens (Human), this protein is Myomesin-1 (MYOM1).